The primary structure comprises 492 residues: Regulatory protein ViaA (492 aa).

The protein belongs to the ViaA family. As to quaternary structure, homodimer. Interacts with RavA.

The protein resides in the cytoplasm. Functionally, component of the RavA-ViaA chaperone complex, which may act on the membrane to optimize the function of some of the respiratory chains. ViaA stimulates the ATPase activity of RavA. This is Regulatory protein ViaA from Pectobacterium carotovorum subsp. carotovorum (strain PC1).